Here is a 62-residue protein sequence, read N- to C-terminus: DNA-directed RNA polymerase subunit omega (62 aa).

This sequence belongs to the RNA polymerase subunit omega family. In terms of assembly, the RNAP catalytic core consists of 2 alpha, 1 beta, 1 beta' and 1 omega subunit. When a sigma factor is associated with the core the holoenzyme is formed, which can initiate transcription.

It carries out the reaction RNA(n) + a ribonucleoside 5'-triphosphate = RNA(n+1) + diphosphate. Promotes RNA polymerase assembly. Latches the N- and C-terminal regions of the beta' subunit thereby facilitating its interaction with the beta and alpha subunits. The protein is DNA-directed RNA polymerase subunit omega of Wigglesworthia glossinidia brevipalpis.